Here is a 317-residue protein sequence, read N- to C-terminus: WD repeat-containing protein 82 (317 aa).

6 WD repeats span residues 21–60, 107–146, 148–186, 194–233, 238–278, and 282–317; these read ENTD…QSRT, GHTK…CQGL, HLSG…KGPF, EKEC…PLQT, PNNK…KVSV, and DHPG…EEGL.

Belongs to the WD repeat SWD2 family. As to quaternary structure, component of the SET1 complex, composed at least of the catalytic subunit Set1, wds/WDR5, Wdr82, Rbbp5, ash2, Cfp1/CXXC1, hcf and Dpy-30L1. Interacts with male-specific lethal (MSL) histone acetyltransferase complex at least composed of mof, msl-1, msl-2 and msl-3. Interacts with su(sable).

It localises to the nucleus. Component of the SET1 complex that specifically di- and trimethylates 'Lys-4' of histone H3. Together with su(sable), part of a transcription termination checkpoint that promotes transcription termination of aberrant RNAs and their subsequent degradation by the nuclear exosome. In Drosophila melanogaster (Fruit fly), this protein is WD repeat-containing protein 82.